A 380-amino-acid chain; its full sequence is 1-deoxy-D-xylulose 5-phosphate reductoisomerase (380 aa).

Residues Ser10, Gly11, Ser12, Ile13, Gly36, Lys37, Asn38, and Asn120 each coordinate NADPH. Lys121 serves as a coordination point for 1-deoxy-D-xylulose 5-phosphate. NADPH is bound at residue Glu122. A Mn(2+)-binding site is contributed by Asp146. Residues Ser147, Glu148, Ser172, and His195 each contribute to the 1-deoxy-D-xylulose 5-phosphate site. Glu148 contacts Mn(2+). Gly201 contributes to the NADPH binding site. 4 residues coordinate 1-deoxy-D-xylulose 5-phosphate: Ser208, Asn213, Lys214, and Glu217. A Mn(2+)-binding site is contributed by Glu217.

Belongs to the DXR family. Mg(2+) serves as cofactor. Mn(2+) is required as a cofactor.

The catalysed reaction is 2-C-methyl-D-erythritol 4-phosphate + NADP(+) = 1-deoxy-D-xylulose 5-phosphate + NADPH + H(+). It participates in isoprenoid biosynthesis; isopentenyl diphosphate biosynthesis via DXP pathway; isopentenyl diphosphate from 1-deoxy-D-xylulose 5-phosphate: step 1/6. In terms of biological role, catalyzes the NADPH-dependent rearrangement and reduction of 1-deoxy-D-xylulose-5-phosphate (DXP) to 2-C-methyl-D-erythritol 4-phosphate (MEP). The polypeptide is 1-deoxy-D-xylulose 5-phosphate reductoisomerase (Bacillus cereus (strain ATCC 10987 / NRS 248)).